The following is a 205-amino-acid chain: Thymidylate kinase (205 aa).

9 to 16 (GPEGSGKT) serves as a coordination point for ATP.

The protein belongs to the thymidylate kinase family.

The catalysed reaction is dTMP + ATP = dTDP + ADP. Phosphorylation of dTMP to form dTDP in both de novo and salvage pathways of dTTP synthesis. This is Thymidylate kinase from Staphylococcus aureus (strain NCTC 8325 / PS 47).